The following is a 548-amino-acid chain: Thermolysin (548 aa).

The first 28 residues, 1 to 28, serve as a signal peptide directing secretion; that stretch reads MKMKMKLASFGLAAGLAAQVFLPYNALA. Residues 29 to 232 constitute a propeptide, activation peptide; that stretch reads STEHVTWNQQ…DAAKPGDVKS (204 aa). 4 residues coordinate Ca(2+): D289, D291, Q293, and D370. H374 contacts Zn(2+). Residue E375 is part of the active site. Residues H378 and E398 each contribute to the Zn(2+) site. Residues E409, N415, D417, E419, E422, Y425, T426, I429, and D432 each contribute to the Ca(2+) site. Catalysis depends on H463, which acts as the Proton donor.

Belongs to the peptidase M4 family. Requires Ca(2+) as cofactor. Zn(2+) serves as cofactor.

The protein localises to the secreted. It carries out the reaction Preferential cleavage: Xaa-|-Leu &gt; Xaa-|-Phe.. Its function is as follows. Extracellular zinc metalloprotease. This Bacillus thermoproteolyticus protein is Thermolysin (npr).